The primary structure comprises 117 residues: MPRVKRGFKARQRRNKVLKLAKGYRGARSKLFRSATEAVDRALNYAFRDRRVKKRDFRALWITRINAAARINGLSYSKLIHGLKLANVEIDRKVMADLAVSDPNGFAAIAAAAKAKF.

It belongs to the bacterial ribosomal protein bL20 family.

Its function is as follows. Binds directly to 23S ribosomal RNA and is necessary for the in vitro assembly process of the 50S ribosomal subunit. It is not involved in the protein synthesizing functions of that subunit. In Citrifermentans bemidjiense (strain ATCC BAA-1014 / DSM 16622 / JCM 12645 / Bem) (Geobacter bemidjiensis), this protein is Large ribosomal subunit protein bL20.